Reading from the N-terminus, the 531-residue chain is Chaperonin GroEL, chloroplastic (531 aa).

ATP contacts are provided by residues 30 to 33, 87 to 91, glycine 415, 481 to 483, and aspartate 497; these read TLGP, DGTTT, and NAA.

It belongs to the chaperonin (HSP60) family. Forms a cylinder of 14 subunits composed of two heptameric rings stacked back-to-back. Interacts with the co-chaperonin GroES.

The protein localises to the plastid. It is found in the chloroplast. It carries out the reaction ATP + H2O + a folded polypeptide = ADP + phosphate + an unfolded polypeptide.. Its function is as follows. Together with its co-chaperonin GroES, plays an essential role in assisting protein folding. The GroEL-GroES system forms a nano-cage that allows encapsulation of the non-native substrate proteins and provides a physical environment optimized to promote and accelerate protein folding. This chain is Chaperonin GroEL, chloroplastic, found in Emiliania huxleyi (Coccolithophore).